The following is a 121-amino-acid chain: Large ribosomal subunit protein uL18 (121 aa).

This sequence belongs to the universal ribosomal protein uL18 family. As to quaternary structure, part of the 50S ribosomal subunit; part of the 5S rRNA/L5/L18/L25 subcomplex. Contacts the 5S and 23S rRNAs.

In terms of biological role, this is one of the proteins that bind and probably mediate the attachment of the 5S RNA into the large ribosomal subunit, where it forms part of the central protuberance. The chain is Large ribosomal subunit protein uL18 from Ureaplasma parvum serovar 3 (strain ATCC 27815 / 27 / NCTC 11736).